A 321-amino-acid polypeptide reads, in one-letter code: Methionyl-tRNA formyltransferase (321 aa).

113-116 (SILP) is a binding site for (6S)-5,6,7,8-tetrahydrofolate.

This sequence belongs to the Fmt family.

It carries out the reaction L-methionyl-tRNA(fMet) + (6R)-10-formyltetrahydrofolate = N-formyl-L-methionyl-tRNA(fMet) + (6S)-5,6,7,8-tetrahydrofolate + H(+). Functionally, attaches a formyl group to the free amino group of methionyl-tRNA(fMet). The formyl group appears to play a dual role in the initiator identity of N-formylmethionyl-tRNA by promoting its recognition by IF2 and preventing the misappropriation of this tRNA by the elongation apparatus. The polypeptide is Methionyl-tRNA formyltransferase (Vibrio atlanticus (strain LGP32) (Vibrio splendidus (strain Mel32))).